We begin with the raw amino-acid sequence, 405 residues long: Glutamate-pyruvate aminotransferase AlaA (405 aa).

L-alanine-binding residues include Gly-41 and Asn-179. Lys-240 is subject to N6-(pyridoxal phosphate)lysine. Position 378 (Arg-378) interacts with L-alanine.

The protein belongs to the class-I pyridoxal-phosphate-dependent aminotransferase family. In terms of assembly, homodimer. Pyridoxal 5'-phosphate is required as a cofactor.

It localises to the cytoplasm. It carries out the reaction L-alanine + 2-oxoglutarate = pyruvate + L-glutamate. The protein operates within amino-acid biosynthesis; L-alanine biosynthesis. Involved in the biosynthesis of alanine. Catalyzes the transamination of pyruvate by glutamate, leading to the formation of L-alanine and 2-oxoglutarate. Is also able to catalyze the reverse reaction. The sequence is that of Glutamate-pyruvate aminotransferase AlaA from Escherichia coli (strain K12).